Here is a 319-residue protein sequence, read N- to C-terminus: Acetyl-coenzyme A carboxylase carboxyl transferase subunit alpha (319 aa).

The 254-residue stretch at 43 to 296 (LRDKSIELTR…KKQLLFDLSE (254 aa)) folds into the CoA carboxyltransferase C-terminal domain.

The protein belongs to the AccA family. As to quaternary structure, acetyl-CoA carboxylase is a heterohexamer composed of biotin carboxyl carrier protein (AccB), biotin carboxylase (AccC) and two subunits each of ACCase subunit alpha (AccA) and ACCase subunit beta (AccD).

The protein resides in the cytoplasm. It carries out the reaction N(6)-carboxybiotinyl-L-lysyl-[protein] + acetyl-CoA = N(6)-biotinyl-L-lysyl-[protein] + malonyl-CoA. Its pathway is lipid metabolism; malonyl-CoA biosynthesis; malonyl-CoA from acetyl-CoA: step 1/1. In terms of biological role, component of the acetyl coenzyme A carboxylase (ACC) complex. First, biotin carboxylase catalyzes the carboxylation of biotin on its carrier protein (BCCP) and then the CO(2) group is transferred by the carboxyltransferase to acetyl-CoA to form malonyl-CoA. The sequence is that of Acetyl-coenzyme A carboxylase carboxyl transferase subunit alpha from Baumannia cicadellinicola subsp. Homalodisca coagulata.